The following is a 399-amino-acid chain: Cytochrome P450 FAS1 (399 aa).

Cys-349 provides a ligand contact to heme.

It belongs to the cytochrome P450 family. It depends on heme as a cofactor.

The protein localises to the cytoplasm. May be involved in the biosynthesis of cytokinin phytohormones and in host plant fasciation (leafy gall). The protein is Cytochrome P450 FAS1 (fas1) of Rhodococcoides fascians (Rhodococcus fascians).